Consider the following 418-residue polypeptide: MNVALEVQTKGQRAREAARILAGLGTSKKNEALLAMARALEEEQEAILAANARDMVAGKEKGLSRALLDRLLLNEKRIRDMAAGLRELAALPDPVGEVTSMWTRPNGLQIGRVRVPLGVIGIIYEARPNVTVDAAGLCLKTGNAVILRGGSEAFYSNQALTRVISRAATAAGAPEGAIQLIETTDREAVNLLLRANDYLDVLIPRGGAGLIRTVVENATVPVIETGVGNCHVYVDAEADLDMAQRIVINAKTQRPGVCNAMETLLVHEKVADSFLPSLAAALKEKGVTIRGCERTRAIIPWAEVATETDWATEYLDLILAIRVVDSLESALEHIHRYGTKHSEAIVTTNYQTAREFLARVDAAAVYVNASTRFTDGYEFGFGAEIGISTQKLHARGPMGPEQLTTFKYIIFGSGQIRQ.

It belongs to the gamma-glutamyl phosphate reductase family.

It localises to the cytoplasm. It catalyses the reaction L-glutamate 5-semialdehyde + phosphate + NADP(+) = L-glutamyl 5-phosphate + NADPH + H(+). The protein operates within amino-acid biosynthesis; L-proline biosynthesis; L-glutamate 5-semialdehyde from L-glutamate: step 2/2. Functionally, catalyzes the NADPH-dependent reduction of L-glutamate 5-phosphate into L-glutamate 5-semialdehyde and phosphate. The product spontaneously undergoes cyclization to form 1-pyrroline-5-carboxylate. The protein is Gamma-glutamyl phosphate reductase of Moorella thermoacetica (strain ATCC 39073 / JCM 9320).